A 545-amino-acid chain; its full sequence is Hydroxylamine reductase (545 aa).

Cysteine 3, cysteine 6, cysteine 15, and cysteine 21 together coordinate [4Fe-4S] cluster. Residues histidine 240, glutamate 264, cysteine 309, cysteine 401, cysteine 429, cysteine 454, glutamate 488, and lysine 490 each coordinate hybrid [4Fe-2O-2S] cluster. Position 401 is a cysteine persulfide (cysteine 401).

Belongs to the HCP family. Requires [4Fe-4S] cluster as cofactor. It depends on hybrid [4Fe-2O-2S] cluster as a cofactor.

It localises to the cytoplasm. It carries out the reaction A + NH4(+) + H2O = hydroxylamine + AH2 + H(+). In terms of biological role, catalyzes the reduction of hydroxylamine to form NH(3) and H(2)O. This Rippkaea orientalis (strain PCC 8801 / RF-1) (Cyanothece sp. (strain PCC 8801)) protein is Hydroxylamine reductase.